A 336-amino-acid polypeptide reads, in one-letter code: tRNA N6-adenosine threonylcarbamoyltransferase (336 aa).

The Fe cation site is built by His112 and His116. Substrate contacts are provided by residues 136–140 (LVSGG), Asp169, Gly182, and Asn276. Asp304 serves as a coordination point for Fe cation.

Belongs to the KAE1 / TsaD family. Requires Fe(2+) as cofactor.

The protein localises to the cytoplasm. The enzyme catalyses L-threonylcarbamoyladenylate + adenosine(37) in tRNA = N(6)-L-threonylcarbamoyladenosine(37) in tRNA + AMP + H(+). Its function is as follows. Required for the formation of a threonylcarbamoyl group on adenosine at position 37 (t(6)A37) in tRNAs that read codons beginning with adenine. Is involved in the transfer of the threonylcarbamoyl moiety of threonylcarbamoyl-AMP (TC-AMP) to the N6 group of A37, together with TsaE and TsaB. TsaD likely plays a direct catalytic role in this reaction. The chain is tRNA N6-adenosine threonylcarbamoyltransferase from Francisella tularensis subsp. novicida (strain U112).